We begin with the raw amino-acid sequence, 426 residues long: Glutamate-1-semialdehyde 2,1-aminomutase (426 aa).

Lys265 is subject to N6-(pyridoxal phosphate)lysine.

It belongs to the class-III pyridoxal-phosphate-dependent aminotransferase family. HemL subfamily. In terms of assembly, homodimer. The cofactor is pyridoxal 5'-phosphate.

The protein resides in the cytoplasm. The catalysed reaction is (S)-4-amino-5-oxopentanoate = 5-aminolevulinate. It participates in porphyrin-containing compound metabolism; protoporphyrin-IX biosynthesis; 5-aminolevulinate from L-glutamyl-tRNA(Glu): step 2/2. The sequence is that of Glutamate-1-semialdehyde 2,1-aminomutase from Akkermansia muciniphila (strain ATCC BAA-835 / DSM 22959 / JCM 33894 / BCRC 81048 / CCUG 64013 / CIP 107961 / Muc).